A 714-amino-acid chain; its full sequence is Fatty acid oxidation complex subunit alpha (714 aa).

Residues 1–190 (MDTVSAFKLE…KAGLVDEVVP (190 aa)) form an enoyl-CoA hydratase region. The 3-hydroxyacyl-CoA dehydrogenase stretch occupies residues 306–714 (GSLRSVAVLG…TFWPADERLT (409 aa)).

The protein in the N-terminal section; belongs to the enoyl-CoA hydratase/isomerase family. In the central section; belongs to the 3-hydroxyacyl-CoA dehydrogenase family. In terms of assembly, heterotetramer of two alpha chains (FadJ) and two beta chains (FadI).

The protein resides in the cytoplasm. It carries out the reaction a (3S)-3-hydroxyacyl-CoA = a (2E)-enoyl-CoA + H2O. The catalysed reaction is a 4-saturated-(3S)-3-hydroxyacyl-CoA = a (3E)-enoyl-CoA + H2O. The enzyme catalyses a (3S)-3-hydroxyacyl-CoA + NAD(+) = a 3-oxoacyl-CoA + NADH + H(+). It catalyses the reaction (3S)-3-hydroxybutanoyl-CoA = (3R)-3-hydroxybutanoyl-CoA. It functions in the pathway lipid metabolism; fatty acid beta-oxidation. Functionally, catalyzes the formation of a hydroxyacyl-CoA by addition of water on enoyl-CoA. Also exhibits 3-hydroxyacyl-CoA epimerase and 3-hydroxyacyl-CoA dehydrogenase activities. The sequence is that of Fatty acid oxidation complex subunit alpha from Klebsiella pneumoniae subsp. pneumoniae (strain ATCC 700721 / MGH 78578).